The primary structure comprises 487 residues: Glutamate--tRNA ligase (487 aa).

A 'HIGH' region motif is present at residues 13–23; that stretch reads PSPTGLFHIGG. The short motif at 255-259 is the 'KMSKS' region element; the sequence is KLSKR. Lys-258 is a binding site for ATP.

The protein belongs to the class-I aminoacyl-tRNA synthetase family. Glutamate--tRNA ligase type 1 subfamily. As to quaternary structure, monomer.

It is found in the cytoplasm. The enzyme catalyses tRNA(Glu) + L-glutamate + ATP = L-glutamyl-tRNA(Glu) + AMP + diphosphate. Functionally, catalyzes the attachment of glutamate to tRNA(Glu) in a two-step reaction: glutamate is first activated by ATP to form Glu-AMP and then transferred to the acceptor end of tRNA(Glu). The chain is Glutamate--tRNA ligase from Malacoplasma penetrans (strain HF-2) (Mycoplasma penetrans).